The primary structure comprises 738 residues: Ethylene receptor 1 (738 aa).

Helical transmembrane passes span 23-43, 53-73, and 92-112; these read ISDFFIAIAYFSIPLELIYFV, WVLVQFGAFIVLCGATHLINL, and VLTAVVSCATALMLVHIIPDL. Cu cation contacts are provided by C65 and H69. The region spanning 158 to 307 is the GAF domain; it reads DRHTILKTTL…VVADQVAVAL (150 aa). A Histidine kinase domain is found at 350–585; the sequence is VMNHEMRTPM…IFDVKLGISE (236 aa). H353 is modified (phosphohistidine; by autocatalysis). ADP is bound by residues 470–473, D513, K529, S544, and L548; that span reads NAVK. Positions 611-729 constitute a Response regulatory domain; that stretch reads KVLVMDENGV…NIRDVLSDLL (119 aa). Position 659 is a 4-aspartylphosphate (D659). K714 is covalently cross-linked (Glycyl lysine isopeptide (Lys-Gly) (interchain with G-Cter in ubiquitin)).

The protein belongs to the ethylene receptor family. As to quaternary structure, homodimer; disulfide-linked. Heteromer with ERS1, ERS2, ETR2 and EIN4. Interacts with AHP1, AHP2 and AHP3. Interacts with RTE1. Interacts with EIN2. Requires Cu cation as cofactor. Post-translationally, autophosphorylated. Phosphorylation at His-353 modulates the interaction with EIN2. As to expression, leaves, roots, stems, seedlings, flowers, anthers, carpels and ovules.

Its subcellular location is the endoplasmic reticulum membrane. The catalysed reaction is ATP + protein L-histidine = ADP + protein N-phospho-L-histidine.. Ethylene receptor related to bacterial two-component regulators. Acts as a redundant negative regulator of ethylene signaling. In the presence of ethylene, the auto-kinase activity of ETR1 is inhibited and the non-phosphorylated kinase domain binds tightly to the corresponding domain of EIN2. The polypeptide is Ethylene receptor 1 (Arabidopsis thaliana (Mouse-ear cress)).